We begin with the raw amino-acid sequence, 372 residues long: GTPase Obg (372 aa).

Positions 1–159 (MAFVDEAKFF…KWLLIELKLM (159 aa)) constitute an Obg domain. The disordered stretch occupies residues 121–141 (GSGGMGNPHFSSGSNRTPRVA). In terms of domain architecture, OBG-type G spans 160–329 (ADVGLVGLPN…LVKLIGDIID (170 aa)). Residues 166–173 (GLPNAGKS), 191–195 (FTTLE), 213–216 (DIPG), 280–283 (NKCD), and 310–312 (SAI) each bind GTP. The Mg(2+) site is built by Ser-173 and Thr-193. Residues 346 to 372 (QDLKKQKEEERRQELKKQKEEEQAKDE) are disordered.

Belongs to the TRAFAC class OBG-HflX-like GTPase superfamily. OBG GTPase family. Monomer. It depends on Mg(2+) as a cofactor.

The protein resides in the cytoplasm. In terms of biological role, an essential GTPase which binds GTP, GDP and possibly (p)ppGpp with moderate affinity, with high nucleotide exchange rates and a fairly low GTP hydrolysis rate. Plays a role in control of the cell cycle, stress response, ribosome biogenesis and in those bacteria that undergo differentiation, in morphogenesis control. The polypeptide is GTPase Obg (Desulfotalea psychrophila (strain LSv54 / DSM 12343)).